The sequence spans 538 residues: Putative cysteine ligase BshC (538 aa).

Residues 454–482 (LEKNAGFIQDQLQFLEKTVIRRIEEKENY) are a coiled coil.

It belongs to the BshC family.

Functionally, involved in bacillithiol (BSH) biosynthesis. May catalyze the last step of the pathway, the addition of cysteine to glucosamine malate (GlcN-Mal) to generate BSH. This Bacillus licheniformis (strain ATCC 14580 / DSM 13 / JCM 2505 / CCUG 7422 / NBRC 12200 / NCIMB 9375 / NCTC 10341 / NRRL NRS-1264 / Gibson 46) protein is Putative cysteine ligase BshC.